We begin with the raw amino-acid sequence, 309 residues long: UDP-3-O-acyl-N-acetylglucosamine deacetylase (309 aa).

His78, His237, and Asp241 together coordinate Zn(2+). His264 (proton donor) is an active-site residue.

The protein belongs to the LpxC family. The cofactor is Zn(2+).

The enzyme catalyses a UDP-3-O-[(3R)-3-hydroxyacyl]-N-acetyl-alpha-D-glucosamine + H2O = a UDP-3-O-[(3R)-3-hydroxyacyl]-alpha-D-glucosamine + acetate. Its pathway is glycolipid biosynthesis; lipid IV(A) biosynthesis; lipid IV(A) from (3R)-3-hydroxytetradecanoyl-[acyl-carrier-protein] and UDP-N-acetyl-alpha-D-glucosamine: step 2/6. Catalyzes the hydrolysis of UDP-3-O-myristoyl-N-acetylglucosamine to form UDP-3-O-myristoylglucosamine and acetate, the committed step in lipid A biosynthesis. In Methylobacillus flagellatus (strain ATCC 51484 / DSM 6875 / VKM B-1610 / KT), this protein is UDP-3-O-acyl-N-acetylglucosamine deacetylase.